The sequence spans 236 residues: Carbonyl reductase family member 4 (236 aa).

NADP(+) contacts are provided by residues 11-14, 34-35, Asp55, and 82-84; these read SRGI, RD, and SAG. Residue Ser134 coordinates substrate. NADP(+)-binding positions include Tyr147, Lys151, and 180–182; that span reads IHT. Tyr147 functions as the Proton acceptor in the catalytic mechanism.

This sequence belongs to the short-chain dehydrogenases/reductases (SDR) family. As to quaternary structure, homotetramer (in vitro). Heterotetramer with HSD17B8; contains two molecules each of HSD17B8 and CBR4.

The protein resides in the mitochondrion matrix. The protein operates within lipid metabolism; fatty acid biosynthesis. Its function is as follows. The heterotetramer with HSD17B8 has NADH-dependent 3-ketoacyl-acyl carrier protein reductase activity, and thereby plays a role in mitochondrial fatty acid biosynthesis. Within the heterotetramer, HSD17B8 binds NADH; CBR4 binds NADPD. The homotetramer has NADPH-dependent quinone reductase activity. Both homotetramer and the heterotetramer have broad in vitro substrate specificity and can reduce 9,10-phenanthrenequinone, 1,4-benzoquinone and various other o-quinones and p-quinones. This Xenopus tropicalis (Western clawed frog) protein is Carbonyl reductase family member 4 (cbr4).